A 634-amino-acid polypeptide reads, in one-letter code: 1-deoxy-D-xylulose-5-phosphate synthase (634 aa).

Thiamine diphosphate is bound by residues His74 and 115–117 (AHS). Residue Asp146 participates in Mg(2+) binding. Residues 147-148 (GA), Asn176, Tyr283, and Glu365 each bind thiamine diphosphate. Asn176 lines the Mg(2+) pocket.

It belongs to the transketolase family. DXPS subfamily. As to quaternary structure, homodimer. Mg(2+) serves as cofactor. The cofactor is thiamine diphosphate.

The catalysed reaction is D-glyceraldehyde 3-phosphate + pyruvate + H(+) = 1-deoxy-D-xylulose 5-phosphate + CO2. Its pathway is metabolic intermediate biosynthesis; 1-deoxy-D-xylulose 5-phosphate biosynthesis; 1-deoxy-D-xylulose 5-phosphate from D-glyceraldehyde 3-phosphate and pyruvate: step 1/1. Functionally, catalyzes the acyloin condensation reaction between C atoms 2 and 3 of pyruvate and glyceraldehyde 3-phosphate to yield 1-deoxy-D-xylulose-5-phosphate (DXP). This chain is 1-deoxy-D-xylulose-5-phosphate synthase, found in Burkholderia cenocepacia (strain ATCC BAA-245 / DSM 16553 / LMG 16656 / NCTC 13227 / J2315 / CF5610) (Burkholderia cepacia (strain J2315)).